The chain runs to 176 residues: NAD(P)H-quinone oxidoreductase subunit 6, chloroplastic (176 aa).

5 helical membrane passes run 10-30 (FLLV…VLLT), 32-52 (PIFS…FFSL), 61-81 (AQLL…VMFM), 92-112 (LWTV…ISLI), and 152-172 (FFLP…GAIA).

It belongs to the complex I subunit 6 family. In terms of assembly, NDH is composed of at least 16 different subunits, 5 of which are encoded in the nucleus.

It is found in the plastid. The protein resides in the chloroplast thylakoid membrane. The enzyme catalyses a plastoquinone + NADH + (n+1) H(+)(in) = a plastoquinol + NAD(+) + n H(+)(out). It carries out the reaction a plastoquinone + NADPH + (n+1) H(+)(in) = a plastoquinol + NADP(+) + n H(+)(out). In terms of biological role, NDH shuttles electrons from NAD(P)H:plastoquinone, via FMN and iron-sulfur (Fe-S) centers, to quinones in the photosynthetic chain and possibly in a chloroplast respiratory chain. The immediate electron acceptor for the enzyme in this species is believed to be plastoquinone. Couples the redox reaction to proton translocation, and thus conserves the redox energy in a proton gradient. The chain is NAD(P)H-quinone oxidoreductase subunit 6, chloroplastic (ndhG) from Oenothera argillicola (Appalachian evening primrose).